Here is a 264-residue protein sequence, read N- to C-terminus: Ribonuclease HII (264 aa).

The RNase H type-2 domain maps to 33–224 (GPVAGVDEVG…VRRVASGSNT (192 aa)). A divalent metal cation-binding residues include D39, E40, and D133. The tract at residues 222–264 (SNTAEVADGQPDPRDGTAQTGEGRWSKSSHPATMRATGRAQGT) is disordered.

The protein belongs to the RNase HII family. It depends on Mn(2+) as a cofactor. The cofactor is Mg(2+).

It is found in the cytoplasm. The catalysed reaction is Endonucleolytic cleavage to 5'-phosphomonoester.. Its function is as follows. Endonuclease that specifically degrades the RNA of RNA-DNA hybrids. In Mycobacterium bovis (strain BCG / Pasteur 1173P2), this protein is Ribonuclease HII.